The chain runs to 423 residues: Zinc-type alcohol dehydrogenase-like protein C1198.01 (423 aa).

The disordered stretch occupies residues 14–36 (KQLGHREVSEGSTQPKPDPSGAT). The Zn(2+) site is built by cysteine 74, histidine 97, cysteine 127, cysteine 130, cysteine 133, and cysteine 141.

Belongs to the zinc-containing alcohol dehydrogenase family. Class-III subfamily. Zn(2+) serves as cofactor.

The protein localises to the golgi apparatus. This Schizosaccharomyces pombe (strain 972 / ATCC 24843) (Fission yeast) protein is Zinc-type alcohol dehydrogenase-like protein C1198.01.